A 212-amino-acid polypeptide reads, in one-letter code: Probable octanoyltransferase (212 aa).

Positions 28–199 constitute a BPL/LPL catalytic domain; sequence GVSEEMILVT…NLETLLQRQE (172 aa). Substrate-binding positions include 66-73, 130-132, and 143-145; these read RGGDATYH, SVG, and GVA. Cysteine 161 (acyl-thioester intermediate) is an active-site residue.

Belongs to the LipB family.

Its subcellular location is the cytoplasm. It catalyses the reaction octanoyl-[ACP] + L-lysyl-[protein] = N(6)-octanoyl-L-lysyl-[protein] + holo-[ACP] + H(+). It functions in the pathway protein modification; protein lipoylation via endogenous pathway; protein N(6)-(lipoyl)lysine from octanoyl-[acyl-carrier-protein]: step 1/2. Its function is as follows. Catalyzes the transfer of endogenously produced octanoic acid from octanoyl-acyl-carrier-protein onto the lipoyl domains of lipoate-dependent enzymes. Lipoyl-ACP can also act as a substrate although octanoyl-ACP is likely to be the physiological substrate. The protein is Probable octanoyltransferase of Pyrobaculum arsenaticum (strain DSM 13514 / JCM 11321 / PZ6).